Here is a 424-residue protein sequence, read N- to C-terminus: UPF0761 membrane protein Smal_0716 (424 aa).

Helical transmembrane passes span 48 to 68 (VFALVPLAIVVFGVLSAFPVF), 101 to 121 (SAGQLTAAGFIALVVSLLITL), 144 to 164 (FLVYWTVLTLGAMLAAASLAV), 181 to 201 (WLADLALRLAPILIEFVCITL), 216 to 236 (AVPGAILAAVILELVKWGIGA), and 251 to 271 (VAFVPILLLWIYLCWVAVLLG).

It belongs to the UPF0761 family.

The protein resides in the cell inner membrane. The protein is UPF0761 membrane protein Smal_0716 of Stenotrophomonas maltophilia (strain R551-3).